The primary structure comprises 465 residues: Cysteine--tRNA ligase (465 aa).

Residue C30 participates in Zn(2+) binding. Residues 32–42 carry the 'HIGH' region motif; the sequence is ITVYDYCHVGH. Residues C214, H239, and E243 each contribute to the Zn(2+) site. The 'KMSKS' region motif lies at 271-275; it reads KMSKS. K274 provides a ligand contact to ATP.

Belongs to the class-I aminoacyl-tRNA synthetase family. Monomer. The cofactor is Zn(2+).

It localises to the cytoplasm. The catalysed reaction is tRNA(Cys) + L-cysteine + ATP = L-cysteinyl-tRNA(Cys) + AMP + diphosphate. The chain is Cysteine--tRNA ligase from Burkholderia ambifaria (strain MC40-6).